A 292-amino-acid chain; its full sequence is Protein/nucleic acid deglycase HchA (292 aa).

Polar residues predominate over residues 1-12; sequence MSQDVNELSKQP. A disordered region spans residues 1–23; that stretch reads MSQDVNELSKQPTPDKAEDNAFF. Cysteine 190 serves as the catalytic Nucleophile.

This sequence belongs to the peptidase C56 family. HchA subfamily.

The protein localises to the cytoplasm. It catalyses the reaction N(omega)-(1-hydroxy-2-oxopropyl)-L-arginyl-[protein] + H2O = lactate + L-arginyl-[protein] + H(+). It carries out the reaction N(6)-(1-hydroxy-2-oxopropyl)-L-lysyl-[protein] + H2O = lactate + L-lysyl-[protein] + H(+). The catalysed reaction is S-(1-hydroxy-2-oxopropyl)-L-cysteinyl-[protein] + H2O = lactate + L-cysteinyl-[protein] + H(+). The enzyme catalyses N(omega)-(1-hydroxy-2-oxoethyl)-L-arginyl-[protein] + H2O = L-arginyl-[protein] + glycolate + H(+). It catalyses the reaction N(6)-(1-hydroxy-2-oxoethyl)-L-lysyl-[protein] + H2O = glycolate + L-lysyl-[protein] + H(+). It carries out the reaction S-(1-hydroxy-2-oxoethyl)-L-cysteinyl-[protein] + H2O = glycolate + L-cysteinyl-[protein] + H(+). The catalysed reaction is N(2)-(1-hydroxy-2-oxopropyl)-dGTP + H2O = lactate + dGTP + H(+). The enzyme catalyses N(2)-(1-hydroxy-2-oxopropyl)-GTP + H2O = lactate + GTP + H(+). It catalyses the reaction N(2)-(1-hydroxy-2-oxopropyl)-GDP + H2O = lactate + GDP + H(+). It carries out the reaction N(2)-(1-hydroxy-2-oxopropyl)-GMP + H2O = lactate + GMP + H(+). The catalysed reaction is N(2)-(1-hydroxy-2-oxoethyl)-dGTP + H2O = dGTP + glycolate + H(+). The enzyme catalyses N(2)-(1-hydroxy-2-oxoethyl)-GTP + H2O = glycolate + GTP + H(+). It catalyses the reaction N(2)-(1-hydroxy-2-oxoethyl)-GDP + H2O = glycolate + GDP + H(+). It carries out the reaction N(2)-(1-hydroxy-2-oxoethyl)-GMP + H2O = glycolate + GMP + H(+). The catalysed reaction is an N(2)-(1-hydroxy-2-oxopropyl)-guanosine in RNA + H2O = a guanosine in RNA + lactate + H(+). The enzyme catalyses an N(2)-(1-hydroxy-2-oxopropyl)-2'-deoxyguanosine in DNA + H2O = a 2'-deoxyguanosine in DNA + lactate + H(+). It catalyses the reaction an N(2)-(1-hydroxy-2-oxoethyl)-guanosine in RNA + H2O = a guanosine in RNA + glycolate + H(+). It carries out the reaction an N(2)-(1-hydroxy-2-oxoethyl)-2'-deoxyguanosine in DNA + H2O = a 2'-deoxyguanosine in DNA + glycolate + H(+). Functionally, protein and nucleotide deglycase that catalyzes the deglycation of the Maillard adducts formed between amino groups of proteins or nucleotides and reactive carbonyl groups of glyoxals. Thus, functions as a protein deglycase that repairs methylglyoxal- and glyoxal-glycated proteins, and releases repaired proteins and lactate or glycolate, respectively. Deglycates cysteine, arginine and lysine residues in proteins, and thus reactivates these proteins by reversing glycation by glyoxals. Acts on early glycation intermediates (hemithioacetals and aminocarbinols), preventing the formation of Schiff bases and advanced glycation endproducts (AGE). Also functions as a nucleotide deglycase able to repair glycated guanine in the free nucleotide pool (GTP, GDP, GMP, dGTP) and in DNA and RNA. Is thus involved in a major nucleotide repair system named guanine glycation repair (GG repair), dedicated to reversing methylglyoxal and glyoxal damage via nucleotide sanitization and direct nucleic acid repair. Plays an important role in protecting cells from carbonyl stress. This Staphylococcus aureus (strain bovine RF122 / ET3-1) protein is Protein/nucleic acid deglycase HchA.